A 412-amino-acid polypeptide reads, in one-letter code: Acetate kinase (412 aa).

N10 is a binding site for Mg(2+). K17 lines the ATP pocket. The segment at 40–61 (ETSRLAHTPSAGGGAEPRERTG) is disordered. R95 lines the substrate pocket. Residue D152 is the Proton donor/acceptor of the active site. Residues 212-216 (HLGNG), 286-288 (DMR), and 334-338 (GVGEN) contribute to the ATP site. Position 388 (E388) interacts with Mg(2+).

This sequence belongs to the acetokinase family. As to quaternary structure, homodimer. Mg(2+) serves as cofactor. It depends on Mn(2+) as a cofactor.

The protein resides in the cytoplasm. The enzyme catalyses acetate + ATP = acetyl phosphate + ADP. Its pathway is metabolic intermediate biosynthesis; acetyl-CoA biosynthesis; acetyl-CoA from acetate: step 1/2. In terms of biological role, catalyzes the formation of acetyl phosphate from acetate and ATP. Can also catalyze the reverse reaction. This Streptomyces griseus subsp. griseus (strain JCM 4626 / CBS 651.72 / NBRC 13350 / KCC S-0626 / ISP 5235) protein is Acetate kinase.